A 327-amino-acid chain; its full sequence is MQIKRLIEKIPGGMMLVPLFLGALCHTFSPGAGKYFGSFTNGMITGTVPILAVWFFCMGASIKLSATGTVLRKSGTLVVTKIAVAWVVAAIASRIIPEHGVEVGFFAGLSTLALVAAMDMTNGGLYASIMQQYGTKEEAGAFVLMSLESGPLMTMIILGTAGIASFEPHVFVGAVLPFLVGFALGNLDPELREFFSKAVQTLIPFFAFALGNTIDLTVIAQTGLLGILLGVAVIIVTGIPLIIADKLIGGGDGTAGIAASSSAGAAVATPVLIAEMVPAFKPMAPAATSLVATAVIVTSILVPILTSIWSRKVKARAAKIEILGTVK.

Helical transmembrane passes span 10–30, 42–62, 73–93, 95–115, 139–159, 163–183, 199–219, 224–244, 254–274, and 289–309; these read IPGG…TFSP, GMIT…GASI, KSGT…AIAS, IIPE…LALV, AGAF…IILG, IASF…VGFA, VQTL…LTVI, LLGI…LIIA, TAGI…VLIA, and SLVA…TSIW.

It belongs to the KdgT transporter family.

The protein localises to the cell inner membrane. It catalyses the reaction 2-dehydro-3-deoxy-D-gluconate(in) + H(+)(in) = 2-dehydro-3-deoxy-D-gluconate(out) + H(+)(out). Functionally, catalyzes the proton-dependent uptake of 2-keto-3-deoxygluconate (KDG) into the cell. The sequence is that of 2-keto-3-deoxygluconate permease from Escherichia coli O157:H7.